We begin with the raw amino-acid sequence, 546 residues long: Chaperonin GroEL (546 aa).

ATP is bound by residues 30–33, 87–91, G414, 477–479, and D493; these read TLGP, DGTTT, and NAL.

This sequence belongs to the chaperonin (HSP60) family. As to quaternary structure, forms a cylinder of 14 subunits composed of two heptameric rings stacked back-to-back. Interacts with the co-chaperonin GroES.

The protein resides in the cytoplasm. It carries out the reaction ATP + H2O + a folded polypeptide = ADP + phosphate + an unfolded polypeptide.. Functionally, together with its co-chaperonin GroES, plays an essential role in assisting protein folding. The GroEL-GroES system forms a nano-cage that allows encapsulation of the non-native substrate proteins and provides a physical environment optimized to promote and accelerate protein folding. The sequence is that of Chaperonin GroEL from Syntrophomonas wolfei subsp. wolfei (strain DSM 2245B / Goettingen).